The following is a 536-amino-acid chain: Interferon alpha/beta receptor 2 (536 aa).

The signal sequence occupies residues 1 to 26 (MLLSQNVSAIGPLNLYPMVHISLVFG). The Extracellular segment spans residues 27–246 (ISYVVPDLSD…RESESSEPAT (220 aa)). Intrachain disulfides connect cysteine 39–cysteine 122 and cysteine 85–cysteine 93. 5 N-linked (GlcNAc...) asparagine glycosylation sites follow: asparagine 58, asparagine 87, asparagine 101, asparagine 147, and asparagine 191. An intrachain disulfide couples cysteine 210 to cysteine 230. Residues 247–267 (IGGILILFLLAAVCISTVMIL) traverse the membrane as a helical segment. The Cytoplasmic portion of the chain corresponds to 268–536 (KRIGYICLRN…VRQVNLKNFN (269 aa)). Tyrosine 340 is modified (phosphotyrosine). Tandem repeats lie at residues 358-362 (SLEDC), 363-367 (SLEDC), and 368-372 (SLEDC). The 3 X 5 AA tandem repeats of S-L-E-D-C stretch occupies residues 358 to 372 (SLEDCSLEDCSLEDC). The disordered stretch occupies residues 369 to 434 (LEDCSDPSAE…SDSTEGSEGR (66 aa)). The span at 420–429 (TSEEDSDSTE) shows a compositional bias: acidic residues. The tract at residues 432-456 (EGRIVFNVNLNSVCVRALEDDKDSE) is mediates interaction with STAT2 (and required for the recruitment of USP18). Serine 480 is subject to Phosphoserine. A disordered region spans residues 487 to 522 (EEGTQLPFTDPSMECLRPQDALSDKSDTSESDVDIG). Tyrosine 525 is modified (phosphotyrosine).

The protein belongs to the type II cytokine receptor family. Heterodimer with IFNAR1; forming the receptor for type I interferon. Interacts with the transcriptional factors STAT1 and STAT2. Interacts with JAK1. Interacts with USP18; indirectly via STAT2, it negatively regulates the assembly of the ternary interferon-IFNAR1-IFNAR2 complex and therefore type I interferon signaling. In terms of processing, phosphorylated on tyrosine residues upon interferon binding. Phosphorylation at Tyr-340 or Tyr-525 are sufficient to mediate interferon dependent activation of STAT1, STAT2 and STAT3 leading to antiproliferative effects on many different cell types. As to expression, expressed in the endometrium. Expressed in all tissues examined except conceptus at day 15 of pregnancy.

It localises to the cell membrane. Together with IFNAR1, forms the heterodimeric receptor for type I interferons (including interferons alpha, beta, epsilon, omega and kappa). Type I interferon binding activates the JAK-STAT signaling cascade, resulting in transcriptional activation or repression of interferon-regulated genes that encode the effectors of the interferon response. Mechanistically, type I interferon-binding brings the IFNAR1 and IFNAR2 subunits into close proximity with one another, driving their associated Janus kinases (JAKs) (TYK2 bound to IFNAR1 and JAK1 bound to IFNAR2) to cross-phosphorylate one another. The activated kinases phosphorylate specific tyrosine residues on the intracellular domains of IFNAR1 and IFNAR2, forming docking sites for the STAT transcription factors (STAT1, STAT2 and STAT). STAT proteins are then phosphorylated by the JAKs, promoting their translocation into the nucleus to regulate expression of interferon-regulated genes. The sequence is that of Interferon alpha/beta receptor 2 (IFNAR2) from Ovis aries (Sheep).